Consider the following 225-residue polypeptide: Alpha-tubulin N-acetyltransferase 1 (225 aa).

The 190-residue stretch at 1–190 folds into the N-acetyltransferase domain; that stretch reads MEFPFDVDAL…NNFVIFEGFF (190 aa). Lysine 56 carries the post-translational modification N6-acetyllysine; by autocatalysis. 124–137 contributes to the acetyl-CoA binding site; sequence FYIHESLQRHGHGR. Lysine 146 is subject to N6-acetyllysine; by autocatalysis. 160–169 is a binding site for acetyl-CoA; sequence SQKLLKFLNK. Residues 195–225 are disordered; that stretch reads PPARKLPPKRAEGDIKPYSSSDRESGLPQGW. The segment covering 203–219 has biased composition (basic and acidic residues); that stretch reads KRAEGDIKPYSSSDRES. N6-acetyllysine; by autocatalysis is present on lysine 210.

It belongs to the acetyltransferase ATAT1 family. In terms of assembly, component of the BBSome complex. Interacts with AP2 alpha-adaptins, including AP2A2, but not with AP1 gamma-adaptin (AP1G1/AP1G2); this interaction is required for efficient alpha-tubulin acetylation, hence clathrin-coated pits are sites of microtubule acetylation. Post-translationally, autoacetylation strongly increases tubulin acetylation.

The protein resides in the cytoplasm. It localises to the membrane. The protein localises to the clathrin-coated pit. It is found in the cell junction. Its subcellular location is the focal adhesion. The protein resides in the cell projection. It localises to the axon. The protein localises to the cytoskeleton. It is found in the spindle. It carries out the reaction L-lysyl-[alpha-tubulin] + acetyl-CoA = N(6)-acetyl-L-lysyl-[alpha-tubulin] + CoA + H(+). Specifically acetylates 'Lys-40' in alpha-tubulin on the lumenal side of microtubules. Promotes microtubule destabilization and accelerates microtubule dynamics; this activity may be independent of acetylation activity. Acetylates alpha-tubulin with a slow enzymatic rate, due to a catalytic site that is not optimized for acetyl transfer. Enters the microtubule through each end and diffuses quickly throughout the lumen of microtubules. Acetylates only long/old microtubules because of its slow acetylation rate since it does not have time to act on dynamically unstable microtubules before the enzyme is released. Required for normal sperm flagellar function. Promotes directional cell locomotion and chemotaxis, through AP2A2-dependent acetylation of alpha-tubulin at clathrin-coated pits that are concentrated at the leading edge of migrating cells. May facilitate primary cilium assembly. The chain is Alpha-tubulin N-acetyltransferase 1 from Bos taurus (Bovine).